An 853-amino-acid polypeptide reads, in one-letter code: Transcription factor CPH2 (853 aa).

Disordered stretches follow at residues 165 to 209 (EPPI…DKNS) and 296 to 353 (NMNP…VHHP). Residues 180 to 194 (TTTVSSTNSITNTTK) are compositionally biased toward low complexity. Residues 205–274 (KDKNSHNMIE…TKATEYIKHL (70 aa)) enclose the bHLH domain. Over residues 301 to 315 (SLPPPPQQMQAPPQP) the composition is skewed to pro residues. Over residues 330–352 (TPASQYPSPQQQVSPTQQQTVHH) the composition is skewed to low complexity.

The protein resides in the nucleus. Functionally, transcription factor that positively controls filamentous growth, virulence, and invasiveness. Binds directly to the two SRE-1-like elements upstream of TEC1 and thus positively regulates expression of this important hyphal growth regulator. Functions independently of known signaling cascades involving EFG1. Also regulates gene expression during intestinal colonization but is not involved in host cell adhesion. The protein is Transcription factor CPH2 (CPH2) of Candida albicans (strain SC5314 / ATCC MYA-2876) (Yeast).